A 249-amino-acid polypeptide reads, in one-letter code: Probable transcriptional regulatory protein Rru_A1086 (249 aa).

Belongs to the TACO1 family.

It is found in the cytoplasm. The protein is Probable transcriptional regulatory protein Rru_A1086 of Rhodospirillum rubrum (strain ATCC 11170 / ATH 1.1.1 / DSM 467 / LMG 4362 / NCIMB 8255 / S1).